The chain runs to 258 residues: uncharacterized protein (258 aa).

Transmembrane regions (helical) follow at residues 21 to 41, 73 to 93, 119 to 139, 153 to 173, 182 to 202, and 229 to 249; these read LIWLPIAMMIVGLTQPLTIYY, LSQFNTLGMALVIFSVMGSVA, WLIQSVIGIMSFAAGYGLAYY, FAASLGLYALWVIFIVTAGLA, GAAAACGIGLTAAVSFAVSLF, and FFGWSLTFSILCIMLLAVFSV.

Its subcellular location is the cell membrane. This is an uncharacterized protein from Bacillus subtilis (strain 168).